A 355-amino-acid polypeptide reads, in one-letter code: N6-Methyl-AMP deaminase (355 aa).

Positions 24 and 26 each coordinate Zn(2+). Residues histidine 26, asparagine 28, histidine 74, 106–109 (STPR), aspartate 148, and glycine 181 each bind N(6)-methyl-AMP. Histidine 208 is a Zn(2+) binding site. N(6)-methyl-AMP is bound by residues glutamate 211, aspartate 293, and aspartate 294. Residue glutamate 211 is the Proton donor of the active site. Position 293 (aspartate 293) interacts with Zn(2+).

It belongs to the metallo-dependent hydrolases superfamily. Adenosine and AMP deaminases family. As to quaternary structure, monomer. Zn(2+) serves as cofactor.

The catalysed reaction is N(6)-methyl-AMP + H2O + H(+) = IMP + methylamine. In terms of biological role, catalyzes the hydrolysis of the free cytosolic methylated adenosine nucleotide N(6)-methyl-AMP (N6-mAMP) to produce inositol monophosphate (IMP) and methylamine. Is required for the catabolism of cytosolic N6-mAMP, which is derived from the degradation of mRNA containing N6-methylated adenine (m6A). Catalyzes the removal of different alkyl groups not only from N6-substituted purine or 2-aminopurine nucleoside monophosphates but also from O6-substituted compounds in vitro. In Homo sapiens (Human), this protein is N6-Methyl-AMP deaminase.